A 241-amino-acid chain; its full sequence is Histone H1-II (241 aa).

Basic and acidic residues predominate over residues 1 to 10 (MASDAPEVKA). 2 disordered regions span residues 1–27 (MASD…THPP) and 89–241 (NSYK…AKKA). The span at 11 to 20 (PKAKTQKKPK) shows a compositional bias: basic residues. Positions 24-95 (THPPYIQMVT…KVKNSYKLSD (72 aa)) constitute an H15 domain. The span at 99-111 (SKAKAAAKPKAAP) shows a compositional bias: basic residues. 3 tandem repeats follow at residues 111–116 (PKKAAA), 117–122 (PKKAAA), and 123–128 (PKKAKA). Residues 111–217 (PKKAAAPKKA…KAATPKKAKA (107 aa)) form an 8 X 6 AA repeats of P-K-K-A-[AK]-A region. The span at 129-155 (PKKEGEKKAVKPKSEKKAAKPKTEKKP) shows a compositional bias: basic and acidic residues. Basic residues-rich tracts occupy residues 156-184 (KAAK…KATP) and 194-241 (AAPK…AKKA). The DNA-binding element occupies 183–186 (TPKK). Repeat copies occupy residues 184-189 (PKKAAA), 190-195 (PKKAAA), 196-201 (PKKAKA), 204-209 (PKKAKA), and 212-217 (PKKAKA). DNA-binding regions lie at residues 203–206 (TPKK) and 211–214 (TPKK).

Belongs to the histone H1/H5 family.

The protein resides in the nucleus. The protein localises to the chromosome. In terms of biological role, histones H1 are necessary for the condensation of nucleosome chains into higher-order structures. The chain is Histone H1-II (H1-II) from Volvox carteri (Green alga).